A 109-amino-acid polypeptide reads, in one-letter code: Ribonuclease P protein component (109 aa).

The protein belongs to the RnpA family. As to quaternary structure, consists of a catalytic RNA component (M1 or rnpB) and a protein subunit.

It catalyses the reaction Endonucleolytic cleavage of RNA, removing 5'-extranucleotides from tRNA precursor.. RNaseP catalyzes the removal of the 5'-leader sequence from pre-tRNA to produce the mature 5'-terminus. It can also cleave other RNA substrates such as 4.5S RNA. The protein component plays an auxiliary but essential role in vivo by binding to the 5'-leader sequence and broadening the substrate specificity of the ribozyme. The polypeptide is Ribonuclease P protein component (Mycoplasma mycoides subsp. mycoides SC (strain CCUG 32753 / NCTC 10114 / PG1)).